A 229-amino-acid polypeptide reads, in one-letter code: ATP synthase subunit a (229 aa).

6 helical membrane-spanning segments follow: residues 14–34, 68–88, 98–118, 124–144, 157–179, and 189–209; these read LIAITNSSMMMMLAVAVALIL, YFPFVFTLFIFIVFLNILGLF, IVVTLGLSFSIVIGVTLGGLW, FLSILMPAGAPLALAPLLVLI, GVRLAANLSAGHLLFAILAGFGF, and NIFPVLIMVFISLLEAAVAVI.

It belongs to the ATPase A chain family. In terms of assembly, F-type ATPases have 2 components, CF(1) - the catalytic core - and CF(0) - the membrane proton channel. CF(1) has five subunits: alpha(3), beta(3), gamma(1), delta(1), epsilon(1). CF(0) has three main subunits: a, b and c.

The protein localises to the mitochondrion inner membrane. Its function is as follows. Mitochondrial membrane ATP synthase (F(1)F(0) ATP synthase or Complex V) produces ATP from ADP in the presence of a proton gradient across the membrane which is generated by electron transport complexes of the respiratory chain. F-type ATPases consist of two structural domains, F(1) - containing the extramembraneous catalytic core and F(0) - containing the membrane proton channel, linked together by a central stalk and a peripheral stalk. During catalysis, ATP synthesis in the catalytic domain of F(1) is coupled via a rotary mechanism of the central stalk subunits to proton translocation. Key component of the proton channel; it may play a direct role in the translocation of protons across the membrane. The protein is ATP synthase subunit a (ATPASE6) of Metridium senile (Brown sea anemone).